The primary structure comprises 449 residues: Elongation factor 1-alpha (449 aa).

The 230-residue stretch at 5-234 (KQHVSIVVIG…DNCDPPKRPV (230 aa)) folds into the tr-type G domain. The G1 stretch occupies residues 14 to 21 (GHVDSGKS). 14–21 (GHVDSGKS) is a GTP binding site. K55 is subject to N6,N6-dimethyllysine. Residues 70–74 (GITID) form a G2 region. Residue K79 is modified to N6,N6,N6-trimethyllysine. Residues 91 to 94 (DAPG) are G3. Residues 91 to 95 (DAPGH) and 153 to 156 (NKMD) each bind GTP. Residues 153 to 156 (NKMD) form a G4 region. Position 187 is an N6,N6,N6-trimethyllysine (K187). The tract at residues 194–196 (SGW) is G5. K265 is modified (N6-methyllysine). N6,N6,N6-trimethyllysine occurs at positions 310 and 400.

Belongs to the TRAFAC class translation factor GTPase superfamily. Classic translation factor GTPase family. EF-Tu/EF-1A subfamily.

The protein localises to the cytoplasm. Its function is as follows. This protein promotes the GTP-dependent binding of aminoacyl-tRNA to the A-site of ribosomes during protein biosynthesis. The protein is Elongation factor 1-alpha of Pyropia yezoensis (Susabi-nori).